Here is a 561-residue protein sequence, read N- to C-terminus: Arginine--tRNA ligase (561 aa).

A 'HIGH' region motif is present at residues 129–139 (ANPTGPLHIGH).

The protein belongs to the class-I aminoacyl-tRNA synthetase family. As to quaternary structure, monomer.

It localises to the cytoplasm. It catalyses the reaction tRNA(Arg) + L-arginine + ATP = L-arginyl-tRNA(Arg) + AMP + diphosphate. The chain is Arginine--tRNA ligase from Geotalea uraniireducens (strain Rf4) (Geobacter uraniireducens).